Reading from the N-terminus, the 574-residue chain is Proline--tRNA ligase (574 aa).

The protein belongs to the class-II aminoacyl-tRNA synthetase family. ProS type 1 subfamily. As to quaternary structure, homodimer.

It localises to the cytoplasm. It catalyses the reaction tRNA(Pro) + L-proline + ATP = L-prolyl-tRNA(Pro) + AMP + diphosphate. In terms of biological role, catalyzes the attachment of proline to tRNA(Pro) in a two-step reaction: proline is first activated by ATP to form Pro-AMP and then transferred to the acceptor end of tRNA(Pro). As ProRS can inadvertently accommodate and process non-cognate amino acids such as alanine and cysteine, to avoid such errors it has two additional distinct editing activities against alanine. One activity is designated as 'pretransfer' editing and involves the tRNA(Pro)-independent hydrolysis of activated Ala-AMP. The other activity is designated 'posttransfer' editing and involves deacylation of mischarged Ala-tRNA(Pro). The misacylated Cys-tRNA(Pro) is not edited by ProRS. The protein is Proline--tRNA ligase of Ralstonia pickettii (strain 12J).